A 229-amino-acid chain; its full sequence is Cytidylate kinase (229 aa).

Position 12–20 (12–20 (GPSGSGKGT)) interacts with ATP.

This sequence belongs to the cytidylate kinase family. Type 1 subfamily.

The protein localises to the cytoplasm. The catalysed reaction is CMP + ATP = CDP + ADP. It catalyses the reaction dCMP + ATP = dCDP + ADP. In Pseudomonas fluorescens (strain ATCC BAA-477 / NRRL B-23932 / Pf-5), this protein is Cytidylate kinase.